A 160-amino-acid polypeptide reads, in one-letter code: S-ribosylhomocysteine lyase (160 aa).

H57, H61, and C127 together coordinate Fe cation.

This sequence belongs to the LuxS family. Homodimer. It depends on Fe cation as a cofactor.

The enzyme catalyses S-(5-deoxy-D-ribos-5-yl)-L-homocysteine = (S)-4,5-dihydroxypentane-2,3-dione + L-homocysteine. In terms of biological role, involved in the synthesis of autoinducer 2 (AI-2) which is secreted by bacteria and is used to communicate both the cell density and the metabolic potential of the environment. The regulation of gene expression in response to changes in cell density is called quorum sensing. Catalyzes the transformation of S-ribosylhomocysteine (RHC) to homocysteine (HC) and 4,5-dihydroxy-2,3-pentadione (DPD). This chain is S-ribosylhomocysteine lyase, found in Streptococcus pneumoniae (strain CGSP14).